The chain runs to 600 residues: KIF-binding protein (600 aa).

A coiled-coil region spans residues lysine 384–leucine 434.

Belongs to the KIF-binding protein family.

It is found in the cytoplasm. The protein localises to the cytoskeleton. This is KIF-binding protein from Drosophila melanogaster (Fruit fly).